The following is a 448-amino-acid chain: tRNA-2-methylthio-N(6)-dimethylallyladenosine synthase (448 aa).

Residues 3-119 enclose the MTTase N-terminal domain; it reads GRVYVKTHGC…LPEMIDRARD (117 aa). 6 residues coordinate [4Fe-4S] cluster: C12, C49, C82, C156, C160, and C163. The 233-residue stretch at 142–374 folds into the Radical SAM core domain; it reads RAEGPTAFVS…QETINANARR (233 aa). One can recognise a TRAM domain in the interval 377 to 440; it reads ESMVGTVQRV…PNSLRGELLG (64 aa).

Belongs to the methylthiotransferase family. MiaB subfamily. In terms of assembly, monomer. [4Fe-4S] cluster is required as a cofactor.

Its subcellular location is the cytoplasm. The enzyme catalyses N(6)-dimethylallyladenosine(37) in tRNA + (sulfur carrier)-SH + AH2 + 2 S-adenosyl-L-methionine = 2-methylsulfanyl-N(6)-dimethylallyladenosine(37) in tRNA + (sulfur carrier)-H + 5'-deoxyadenosine + L-methionine + A + S-adenosyl-L-homocysteine + 2 H(+). In terms of biological role, catalyzes the methylthiolation of N6-(dimethylallyl)adenosine (i(6)A), leading to the formation of 2-methylthio-N6-(dimethylallyl)adenosine (ms(2)i(6)A) at position 37 in tRNAs that read codons beginning with uridine. The sequence is that of tRNA-2-methylthio-N(6)-dimethylallyladenosine synthase from Alkalilimnicola ehrlichii (strain ATCC BAA-1101 / DSM 17681 / MLHE-1).